A 791-amino-acid chain; its full sequence is Biofilm architecture maintenance protein MbaA (791 aa).

A signal peptide spans 1–23; that stretch reads MKLNHRILLLIAPVILLSAAASS. The Periplasmic segment spans residues 24 to 259; sequence YIIYTSQKNA…NAQLHSIQRE (236 aa). A helical membrane pass occupies residues 260 to 280; it reads LLLSFGVSALVTVLMLLLLLY. An HAMP domain is found at 281–333; the sequence is RHVINPILHLDKQLEEVENNQRKNIEKLNTDDEIGRLSSRFYAMYSELHSTYQ. The Cytoplasmic segment spans residues 281-791; the sequence is RHVINPILHL…FTEPSQSECR (511 aa). The region spanning 368–509 is the GGDEF domain; the sequence is QHIWVMYIDL…GKNQVAYYSQ (142 aa). The 252-residue stretch at 518 to 769 folds into the EAL domain; the sequence is RNNIERALRL…EISPWLHASN (252 aa).

Its subcellular location is the cell inner membrane. Its function is as follows. Plays an essential role in the maintenance and the formation of the three-dimensional structure of the biofilms at the later stages of their development. Absence of mbaA promotes the accumulation of larger amount of biomass on the surfaces at later stage of development, results in the overproduction of an extracellular polymeric substance that accumulates in the matrix of biofilms. This yields biofilms lacking the typical structure consisting of pillars of cells separated by fluid filled channels. This chain is Biofilm architecture maintenance protein MbaA (mbaA), found in Vibrio cholerae serotype O1 (strain ATCC 39315 / El Tor Inaba N16961).